The following is a 396-amino-acid chain: Elongation factor Tu 1 (396 aa).

A tr-type G domain is found at 10 to 206 (KPHINVGTIG…AMDAHIPQPE (197 aa)). The tract at residues 19-26 (GHVDHGKT) is G1. 19–26 (GHVDHGKT) lines the GTP pocket. Residue Thr26 participates in Mg(2+) binding. Residues 60–64 (GITIA) form a G2 region. The tract at residues 81–84 (DCPG) is G3. GTP-binding positions include 81–85 (DCPGH) and 136–139 (NKAD). Positions 136–139 (NKAD) are G4. The tract at residues 174–176 (SAL) is G5.

Belongs to the TRAFAC class translation factor GTPase superfamily. Classic translation factor GTPase family. EF-Tu/EF-1A subfamily. In terms of assembly, monomer.

Its subcellular location is the cytoplasm. The catalysed reaction is GTP + H2O = GDP + phosphate + H(+). Its function is as follows. GTP hydrolase that promotes the GTP-dependent binding of aminoacyl-tRNA to the A-site of ribosomes during protein biosynthesis. This Halorhodospira halophila (strain DSM 244 / SL1) (Ectothiorhodospira halophila (strain DSM 244 / SL1)) protein is Elongation factor Tu 1.